Reading from the N-terminus, the 270-residue chain is Tetraspanin-17 (270 aa).

The Cytoplasmic segment spans residues 1–19; it reads MPGKHQHFQEPEVGCCGKY. A helical membrane pass occupies residues 20-40; sequence FLFGFNIVFWVLGALFLAIGL. The Extracellular portion of the chain corresponds to 41-63; the sequence is WAWSEKGVLSNISALTDLGGLDP. Asn-51 is a glycosylation site (N-linked (GlcNAc...) asparagine). The chain crosses the membrane as a helical span at residues 64–84; sequence VWLFVVVGGVMSVLGFAGCIG. The Cytoplasmic portion of the chain corresponds to 85-94; the sequence is ALRENTFLLK. The helical transmembrane segment at 95–115 threads the bilayer; the sequence is FFSVFLGLIFFLELATGILAF. The Extracellular segment spans residues 116-234; that stretch reads VFKDWIRDQL…GQFEKWLQDN (119 aa). 4 cysteine pairs are disulfide-bonded: Cys-155-Cys-223, Cys-156-Cys-188, Cys-172-Cys-182, and Cys-189-Cys-202. An N-linked (GlcNAc...) asparagine glycan is attached at Asn-171. The chain crosses the membrane as a helical span at residues 235–255; the sequence is LIVVAGVFVGIALLQIFGICL. The Cytoplasmic portion of the chain corresponds to 256 to 270; the sequence is AQNLVSDIKAVKANW.

The protein belongs to the tetraspanin (TM4SF) family. As to quaternary structure, interacts with ADAM10; the interaction influences ADAM10 substrate specificity, endocytosis and turnover.

The protein localises to the cell membrane. In terms of biological role, part of TspanC8 subgroup, composed of 6 members that interact with the transmembrane metalloprotease ADAM10. This interaction is required for ADAM10 exit from the endoplasmic reticulum and for enzymatic maturation and trafficking to the cell surface as well as substrate specificity. Different TspanC8/ADAM10 complexes have distinct substrates. Seems to regulate VE-cadherin expression in endothelial cells probably through interaction with ADAM10, promoting leukocyte transmigration. This chain is Tetraspanin-17 (TSPAN17), found in Bos taurus (Bovine).